A 687-amino-acid polypeptide reads, in one-letter code: Polyphosphate kinase (687 aa).

Asn45 lines the ATP pocket. Mg(2+)-binding residues include Arg375 and Arg405. The active-site Phosphohistidine intermediate is His435. Positions 472, 568, and 596 each coordinate ATP.

This sequence belongs to the polyphosphate kinase 1 (PPK1) family. Requires Mg(2+) as cofactor. In terms of processing, an intermediate of this reaction is the autophosphorylated ppk in which a phosphate is covalently linked to a histidine residue through a N-P bond.

It catalyses the reaction [phosphate](n) + ATP = [phosphate](n+1) + ADP. Functionally, catalyzes the reversible transfer of the terminal phosphate of ATP to form a long-chain polyphosphate (polyP). The polypeptide is Polyphosphate kinase (Burkholderia multivorans (strain ATCC 17616 / 249)).